A 487-amino-acid polypeptide reads, in one-letter code: Proline--tRNA ligase (487 aa).

The protein belongs to the class-II aminoacyl-tRNA synthetase family. ProS type 3 subfamily. Homodimer.

The protein resides in the cytoplasm. The enzyme catalyses tRNA(Pro) + L-proline + ATP = L-prolyl-tRNA(Pro) + AMP + diphosphate. Catalyzes the attachment of proline to tRNA(Pro) in a two-step reaction: proline is first activated by ATP to form Pro-AMP and then transferred to the acceptor end of tRNA(Pro). The sequence is that of Proline--tRNA ligase from Pyrobaculum neutrophilum (strain DSM 2338 / JCM 9278 / NBRC 100436 / V24Sta) (Thermoproteus neutrophilus).